A 377-amino-acid polypeptide reads, in one-letter code: Probable multidrug ABC transporter permease YbhS (377 aa).

The Cytoplasmic portion of the chain corresponds to 1-28; the sequence is MSNPILSWRRVRALCVKETRQIVRDPSS. The chain crosses the membrane as a helical span at residues 29-49; that stretch reads WLIAVVIPLLLLFIFGYGINL. Residues 50-181 lie on the Periplasmic side of the membrane; sequence DSSKLRVGIL…WFNPAAISQH (132 aa). The 231-residue stretch at 145 to 375 folds into the ABC transmembrane type-2 domain; that stretch reads IWQIWQMQRA…GLTWLKTKRR (231 aa). A helical transmembrane segment spans residues 182–202; that stretch reads FIIPGAVTIIMTVIGAILTSL. Residues 203 to 234 are Cytoplasmic-facing; that stretch reads VVAREWERGTMEALLSTEITRTELLLCKLIPY. Residues 235–255 traverse the membrane as a helical segment; that stretch reads YFLGMLAMLLCMLVSVFILGV. Residues 256-261 are Periplasmic-facing; sequence PYRGSL. The helical transmembrane segment at 262-282 threads the bilayer; that stretch reads LILFFISSLFLLSTLGMGLLI. Residues 283 to 291 lie on the Cytoplasmic side of the membrane; that stretch reads STITRNQFN. Residues 292 to 312 traverse the membrane as a helical segment; the sequence is AAQVALNAAFLPSIMLSGFIF. Residues 313–345 lie on the Periplasmic side of the membrane; it reads QIDSMPAVIRAVTYIIPARYFVSTLQSLFLAGN. The chain crosses the membrane as a helical span at residues 346–366; sequence IPVVLVVNVLFLIASAVMFIG. Residues 367-377 lie on the Cytoplasmic side of the membrane; that stretch reads LTWLKTKRRLD.

This sequence belongs to the ABC-2 integral membrane protein family. In terms of assembly, the complex is probably composed of two ATP-binding proteins (YbhF) and two transmembrane proteins (YbhR and YbhS).

The protein localises to the cell inner membrane. Its function is as follows. Part of the ABC transporter complex YbhFSR that could be involved in efflux of cefoperazone. Probably involved in the translocation of the substrate across the membrane. In Escherichia coli O157:H7, this protein is Probable multidrug ABC transporter permease YbhS (ybhS).